The primary structure comprises 826 residues: E3 ubiquitin ligase PARAQUAT TOLERANCE 3 (826 aa).

Residues 3-76 enclose the DWNN domain; sequence IYYKFKSARD…NTSVLIRRVP (74 aa). Residues 203–216 form a CCHC-type zinc finger; sequence CHRCNVSGHFIQHC. Phosphoserine is present on Ser278. The RING-type; degenerate zinc finger occupies 288-326; the sequence is CPLCKEVMRDAALASKCCLKSYCDKCIRDHIIAKSMCVC. Composition is skewed to polar residues over residues 356 to 365, 396 to 406, and 435 to 454; these read SAENAGSMCQ, PSNNNETSTLK, and NIQG…NTQP. Disordered regions lie at residues 356-406, 435-488, and 585-826; these read SAEN…STLK, NIQG…GPDY, and HPIM…RARA. At Ser397 the chain carries Phosphoserine. Basic and acidic residues predominate over residues 588–624; it reads MGREEFEAKKTEMKRKRENEIRRSEGGNVVRDSEKSR. Over residues 625–635 the composition is skewed to polar residues; the sequence is IMNNSAVTSSP. Residues 651 to 667 are compositionally biased toward basic and acidic residues; that stretch reads DYDRRRRSDRSSPERQS. Short sequence motifs (nuclear localization signal) lie at residues 668–675 and 695–702; these read SRRFTSPP and DRRRDRPR. The span at 680–706 shows a compositional bias: basic and acidic residues; that stretch reads RKSERDRHHDLDSEHDRRRDRPRETDR. Residues 790–799 show a composition bias toward basic residues; sequence FKRKPSRYKR. Ser800 carries the phosphoserine modification. Residues 809 to 826 are compositionally biased toward basic and acidic residues; that stretch reads GDEHFRHSKRSKGERARA.

Interacts with PRMT13/PRMT4B in the nucleus. As to expression, expressed constitutively in both shoot and root tissues.

The protein localises to the nucleus. The enzyme catalyses S-ubiquitinyl-[E2 ubiquitin-conjugating enzyme]-L-cysteine + [acceptor protein]-L-lysine = [E2 ubiquitin-conjugating enzyme]-L-cysteine + N(6)-ubiquitinyl-[acceptor protein]-L-lysine.. E3 ubiquitin ligase acting as a negative regulator of oxidative stress tolerance, probably by mediating 26S proteasome-mediated degradation of PRMT13/PRMT4B, thus preventing APX1 and GPX1 accumulation via the reduction of histone H3 methylation (H3R17me2a). Confers sensitivity to cadmium CdCl(2) and salt NaCl stresses. The chain is E3 ubiquitin ligase PARAQUAT TOLERANCE 3 from Arabidopsis thaliana (Mouse-ear cress).